The following is a 193-amino-acid chain: 7-methyl-GTP pyrophosphatase (193 aa).

The active-site Proton acceptor is Asp-68.

This sequence belongs to the Maf family. YceF subfamily. A divalent metal cation serves as cofactor.

The protein resides in the cytoplasm. It carries out the reaction N(7)-methyl-GTP + H2O = N(7)-methyl-GMP + diphosphate + H(+). Functionally, nucleoside triphosphate pyrophosphatase that hydrolyzes 7-methyl-GTP (m(7)GTP). May have a dual role in cell division arrest and in preventing the incorporation of modified nucleotides into cellular nucleic acids. This is 7-methyl-GTP pyrophosphatase from Chromobacterium violaceum (strain ATCC 12472 / DSM 30191 / JCM 1249 / CCUG 213 / NBRC 12614 / NCIMB 9131 / NCTC 9757 / MK).